A 1172-amino-acid chain; its full sequence is Structural maintenance of chromosomes protein 2 (1172 aa).

Glycine 32–serine 39 contacts ATP. 2 coiled-coil regions span residues arginine 172 to glutamate 204 and serine 258 to glutamate 507. The SMC hinge domain maps to serine 520–valine 640. A coiled-coil region spans residues leucine 676–tryptophan 941.

Belongs to the SMC family. SMC2 subfamily. In terms of assembly, forms a heterodimer with cut3/smc4. Component of the condensin complex, which contains the cut3 and cut14 heterodimer, and three non smc subunits that probably regulate the complex: cnd1, cnd2 and cnd3.

The protein localises to the nucleus. Its subcellular location is the cytoplasm. It localises to the chromosome. Central component of the condensin complex, a complex required for conversion of interphase chromatin into mitotic-like condense chromosomes. The condensin complex probably introduces positive supercoils into relaxed DNA in the presence of type I topoisomerases and converts nicked DNA into positive knotted forms in the presence of type II topoisomerases. The sequence is that of Structural maintenance of chromosomes protein 2 (cut14) from Schizosaccharomyces pombe (strain 972 / ATCC 24843) (Fission yeast).